The following is a 141-amino-acid chain: Large ribosomal subunit protein uL16 (141 aa).

The protein belongs to the universal ribosomal protein uL16 family. As to quaternary structure, part of the 50S ribosomal subunit.

Binds 23S rRNA and is also seen to make contacts with the A and possibly P site tRNAs. This Aliarcobacter butzleri (strain RM4018) (Arcobacter butzleri) protein is Large ribosomal subunit protein uL16.